Reading from the N-terminus, the 190-residue chain is Guanylate kinase (190 aa).

Residues 8-186 form the Guanylate kinase-like domain; the sequence is ARPTVLTGPS…ALAELEKQMN (179 aa). 15–22 lines the ATP pocket; it reads GPSGVGKG.

Belongs to the guanylate kinase family.

It is found in the cytoplasm. The enzyme catalyses GMP + ATP = GDP + ADP. It carries out the reaction dZMP + ATP = dZDP + ADP. It functions in the pathway purine metabolism. In terms of biological role, essential for recycling GMP and indirectly, cGMP. (Microbial infection) Catalyzes the phosphorylation of dZMP to dZDP, when the bacterium is infected by a phage that produces the substrate for the synthesis of dZTP (2- amino-2'-deoxyadenosine 5'-triphosphate), which is then used by the phage as a DNA polymerase substrate. This chain is Guanylate kinase, found in Synechococcus sp. (strain CC9311).